Here is a 48-residue protein sequence, read N- to C-terminus: Keratin-associated protein 22-1 (48 aa).

In terms of assembly, interacts with hair keratins.

In terms of biological role, in the hair cortex, hair keratin intermediate filaments are embedded in an interfilamentous matrix, consisting of hair keratin-associated proteins (KRTAP), which are essential for the formation of a rigid and resistant hair shaft through their extensive disulfide bond cross-linking with abundant cysteine residues of hair keratins. The matrix proteins include the high-sulfur and high-glycine-tyrosine keratins. The protein is Keratin-associated protein 22-1 (KRTAP22-1) of Homo sapiens (Human).